A 61-amino-acid polypeptide reads, in one-letter code: Bacteriocin leucocin-B (61 aa).

Residues 1–24 (MNNMKSADNYQQLDNNALEQVVGG) constitute a propeptide that is removed on maturation. A disulfide bond links Cys-33 and Cys-38.

It belongs to the bacteriocin class IIA/YGNGV family.

The protein localises to the secreted. Active against L.monocytogenes and several lactic acid bacteria. The protein is Bacteriocin leucocin-B of Leuconostoc carnosum.